A 705-amino-acid polypeptide reads, in one-letter code: Elongation factor G (705 aa).

The tr-type G domain occupies 8 to 290 (HRYRNIGIMA…GVIHLLPSPA (283 aa)). Residues 17–24 (AHIDAGKT), 88–92 (DTPGH), and 142–145 (NKMD) each bind GTP.

The protein belongs to the TRAFAC class translation factor GTPase superfamily. Classic translation factor GTPase family. EF-G/EF-2 subfamily.

The protein resides in the cytoplasm. In terms of biological role, catalyzes the GTP-dependent ribosomal translocation step during translation elongation. During this step, the ribosome changes from the pre-translocational (PRE) to the post-translocational (POST) state as the newly formed A-site-bound peptidyl-tRNA and P-site-bound deacylated tRNA move to the P and E sites, respectively. Catalyzes the coordinated movement of the two tRNA molecules, the mRNA and conformational changes in the ribosome. This Xylella fastidiosa (strain 9a5c) protein is Elongation factor G.